Reading from the N-terminus, the 426-residue chain is Glutamate-1-semialdehyde 2,1-aminomutase (426 aa).

Lysine 265 bears the N6-(pyridoxal phosphate)lysine mark.

This sequence belongs to the class-III pyridoxal-phosphate-dependent aminotransferase family. HemL subfamily. Homodimer. Pyridoxal 5'-phosphate serves as cofactor.

It localises to the cytoplasm. The enzyme catalyses (S)-4-amino-5-oxopentanoate = 5-aminolevulinate. The protein operates within porphyrin-containing compound metabolism; protoporphyrin-IX biosynthesis; 5-aminolevulinate from L-glutamyl-tRNA(Glu): step 2/2. The chain is Glutamate-1-semialdehyde 2,1-aminomutase from Actinobacillus pleuropneumoniae serotype 7 (strain AP76).